Here is a 320-residue protein sequence, read N- to C-terminus: Endolytic peptidoglycan transglycosylase RlpA (320 aa).

This sequence belongs to the RlpA family.

Lytic transglycosylase with a strong preference for naked glycan strands that lack stem peptides. In Rickettsia typhi (strain ATCC VR-144 / Wilmington), this protein is Endolytic peptidoglycan transglycosylase RlpA.